Consider the following 255-residue polypeptide: MIRQVIQRISNPEASIESLQERRFWLQCERAYTWQPIYQTCGRLMAVELLTVVTHPLNPSQRLPPDRYFTEITVSHRMEVVKEQIDLLAQKADFFIEHGLLASVNIDGPTLIALRQQPKILRQIERLPWLRFELVEHIRLPKDSTFASMCEFGPLWLDDFGTGMANFSALSEVRYDYIKIARELFVMLRQSPEGRTLFSQLLHLMNRYCRGVIVEGVETPEEWRDVQNSPAFAAQGWFLSRPAPIETLNTAVLAL.

The region spanning 13-255 (EASIESLQER…ETLNTAVLAL (243 aa)) is the EAL domain.

It catalyses the reaction 3',3'-c-di-GMP + H2O = 5'-phosphoguanylyl(3'-&gt;5')guanosine + H(+). Functionally, involved in the control of the switch from cell motility to adhesion via regulation of cellular levels of cyclic-di-GMP (c-di-GMP). Part of a signaling cascade that regulates curli biosynthesis. The cascade is composed of two c-di-GMP control modules, in which c-di-GMP controlled by the DgcE/PdeH pair (module I) regulates the activity of the DgcM/PdeR pair (module II), which in turn regulates activity of the transcription factor MlrA and expression of the master biofilm regulator csgD. Effect on flagella is controlled via the c-di-GMP-binding flagellar brake protein YcgR. The sequence is that of Cyclic di-GMP phosphodiesterase PdeH from Escherichia coli (strain K12).